Reading from the N-terminus, the 432-residue chain is Neuronal pentraxin-2 (432 aa).

Residues 1–14 (MLALLTAGVALAVA) form the signal peptide. N-linked (GlcNAc...) asparagine glycans are attached at residues Asn149 and Asn190. The 202-residue stretch at 224-425 (DAFKVSLPLR…GASKWPVETC (202 aa)) folds into the Pentraxin (PTX) domain. The cysteines at positions 254 and 314 are disulfide-linked. Residues Asn278, Glu356, Gln357, Asp358, and Gln368 each coordinate Ca(2+). Asn394 carries an N-linked (GlcNAc...) asparagine glycan.

In terms of assembly, homooligomer or heterooligomer (probably pentamer) with neuronal pentraxin receptor (NPTXR). Ca(2+) serves as cofactor.

The protein resides in the secreted. Functionally, likely to play role in the modification of cellular properties that underlie long-term plasticity. Binds to agar matrix in a calcium-dependent manner. The chain is Neuronal pentraxin-2 (Nptx2) from Rattus norvegicus (Rat).